A 175-amino-acid polypeptide reads, in one-letter code: Shikimate kinase (175 aa).

Residue 12–19 (GGRASGKS) coordinates ATP.

Belongs to the shikimate kinase family.

It localises to the cytoplasm. It catalyses the reaction shikimate + ATP = 3-phosphoshikimate + ADP + H(+). It functions in the pathway metabolic intermediate biosynthesis; chorismate biosynthesis; chorismate from D-erythrose 4-phosphate and phosphoenolpyruvate: step 5/7. The polypeptide is Shikimate kinase (Nitratidesulfovibrio vulgaris (strain ATCC 29579 / DSM 644 / CCUG 34227 / NCIMB 8303 / VKM B-1760 / Hildenborough) (Desulfovibrio vulgaris)).